We begin with the raw amino-acid sequence, 164 residues long: MQRIALYPGSFDPVTNGHLDVVRQAVHLCDRLIVAVGVHHGKKPLFSTEERLAMVHEVLEPVAAAAGCGFEASTYDDLTVTAAQKAGAIMMIRGLRDGTDFDYEMQLAGMNQTMVPGIQTVFVPASVAVRPIAATLVRQIAAMGGDVSHFVPAAVAASLKAKFN.

Position 10 (serine 10) interacts with substrate. ATP-binding positions include 10 to 11 (SF) and histidine 18. Substrate-binding residues include lysine 42, threonine 79, and arginine 93. ATP-binding positions include 94-96 (GLR), glutamate 104, and 129-135 (VRPIAAT).

It belongs to the bacterial CoaD family. As to quaternary structure, homohexamer. The cofactor is Mg(2+).

It localises to the cytoplasm. The enzyme catalyses (R)-4'-phosphopantetheine + ATP + H(+) = 3'-dephospho-CoA + diphosphate. It functions in the pathway cofactor biosynthesis; coenzyme A biosynthesis; CoA from (R)-pantothenate: step 4/5. Its function is as follows. Reversibly transfers an adenylyl group from ATP to 4'-phosphopantetheine, yielding dephospho-CoA (dPCoA) and pyrophosphate. This Bradyrhizobium sp. (strain BTAi1 / ATCC BAA-1182) protein is Phosphopantetheine adenylyltransferase.